The chain runs to 126 residues: Fluoride-specific ion channel FluC (126 aa).

Helical transmembrane passes span 33-53 (LPLNVLIVNVIGAFILGVFIV), 64-84 (YSLFAAIGFCGSLTTMSSFAL), and 96-116 (GALAANIIVNVGLSIGALIGG). 2 residues coordinate Na(+): glycine 74 and threonine 77.

The protein belongs to the fluoride channel Fluc/FEX (TC 1.A.43) family.

The protein resides in the cell membrane. It carries out the reaction fluoride(in) = fluoride(out). Na(+) is not transported, but it plays an essential structural role and its presence is essential for fluoride channel function. Fluoride-specific ion channel. Important for reducing fluoride concentration in the cell, thus reducing its toxicity. The chain is Fluoride-specific ion channel FluC from Nitrosopumilus maritimus (strain SCM1).